Here is a 970-residue protein sequence, read N- to C-terminus: Polycystin-2 (970 aa).

Positions 1-11 (MVNSSRVQPQQ) are enriched in polar residues. Positions 1-182 (MVNSSRVQPQ…GDPLHRHLPL (182 aa)) are disordered. Residues 1–221 (MVNSSRVQPQ…STDREKYLKS (221 aa)) lie on the Cytoplasmic side of the membrane. The segment covering 25 to 45 (GPGRLMAGGAIAGAGLAAPGG) has biased composition (low complexity). A compositionally biased stretch (basic and acidic residues) spans 47–60 (REQRGLEIEMERIR). The segment covering 62-83 (AAARDPPAGASASPSPPLSSCS) has biased composition (low complexity). Phosphoserine occurs at positions 76 and 80. The span at 95 to 109 (EAEEEEEEEEVEGEE) shows a compositional bias: acidic residues. Residues 125 to 138 (RRSASSSAVSSAGA) show a composition bias toward low complexity. Arg139 is modified (omega-N-methylarginine). Positions 139 to 148 (RGRGLGGYHG) are enriched in gly residues. The helical transmembrane segment at 222–243 (VLRELATYLLFLIVLCILTYGM) threads the bilayer. The Extracellular segment spans residues 244–470 (MSSSVYYYTR…PVKLIRYVTT (227 aa)). N-linked (GlcNAc...) asparagine glycans are attached at residues Asn301, Asn307, and Asn330. Cys333 and Cys346 are oxidised to a cystine. Residues Asn364 and Asn377 are each glycosylated (N-linked (GlcNAc...) asparagine). The helical transmembrane segment at 471–491 (FDFFLAACEIIFCLFILYYVV) threads the bilayer. The Cytoplasmic portion of the chain corresponds to 492–507 (EEILEIRIHKLHYFRS). Residues 508 to 528 (FWNCLDVVIIVLSVVAIGINI) form a helical membrane-spanning segment. The Extracellular portion of the chain corresponds to 529 to 554 (YRTSNVEALLQFLEDQNTFPNFENLA). The helical transmembrane segment at 555–575 (YWQTQFNNIAAVIVFFVWIKL) threads the bilayer. Residue Gln559 coordinates cholesterol. Over 576–599 (FKFINFNRTMSQLSTTMSRCAKDL) the chain is Cytoplasmic. The helical transmembrane segment at 600-621 (FGFAIMFFIIFLAYAQLAYLVF) threads the bilayer. Residues 622-633 (GTQVDDFSTFQE) are Extracellular-facing. Residues 634–648 (CIFTQFRIILGDINF) constitute an intramembrane region (pore-forming). Ca(2+) is bound at residue Leu643. The Selectivity filter motif lies at 643-645 (LGD). Topologically, residues 649-656 (AEIEEANR) are extracellular. The chain crosses the membrane as a helical span at residues 657-677 (VLGPIYFTTFVFFMFFILLNM). Residues 678-970 (FLAIINDTYS…GGNGSANIHV (293 aa)) are Cytoplasmic-facing. An EF-hand domain is found at 750–785 (KGHTDAEIEAIFTKYDQDGDQELTEHEHQQMRDDLE). Ca(2+) contacts are provided by Asp765, Asp767, Asp769, Glu771, and Glu776. Positions 766–833 (QDGDQELTEH…HSSRRRGSIS (68 aa)) are disordered. Over residues 772–797 (LTEHEHQQMRDDLEKEREDLDLDHSS) the composition is skewed to basic and acidic residues. Over residues 798-809 (LPRPMSSRSFPR) the composition is skewed to low complexity. Phosphoserine occurs at positions 803, 810, 814, and 831. The linker stretch occupies residues 805–824 (RSFPRSLDDSEEEDDDDSGH). The tract at residues 812–823 (DDSEEEDDDDSG) is important for interaction with PACS1 and PACS2. The stretch at 835-874 (GVSYEEFQVLVRRVDRMEHSIGSIVSKIDAVIVKLEIMER) forms a coiled coil. The disordered stretch occupies residues 921–970 (DDAASQISHGLGTPLGLNGQPRPRSSRPSSSQSTEGMEGGGGNGSANIHV). Residues 940–956 (QPRPRSSRPSSSQSTEG) are compositionally biased toward low complexity.

This sequence belongs to the polycystin family. In terms of assembly, homotetramer. Component of the heterotetrameric polycystin channel complex with PKD1; the tetramer contains one PKD1 chain and three PKD2 chains. Isoform 1 interacts with PKD1 while isoform 3 does not. Interacts with PKD1L1; probably forms a Ca(2+) channel. Interacts with CD2AP. Interacts with HAX1. Interacts with NEK8. Part of a complex containing AKAP5, ADCY5, ADCY6 and PDE4C. Interacts (via C-terminus) with TRPV4 (via C-terminus). Interacts (via C-terminal acidic region) with PACS1 and PACS2; these interactions retain the protein in the endoplasmic reticulum and prevent trafficking to the cell membrane. Interacts with TMEM33. Form a heterotetramer with TRPC1 with a 2:2 stoichiometry; has distinct channel properties separate from PKD2 or TRPC1 homomers alone. Interacts with TMEM120A; TMEM120A inhibits PKD2 channel activity through the physical association of PKD2 with TMEM120A. Interacts (via N-terminus) with RYR2; regulates RYR2 channel activity. N-glycosylated. The four subunits in a tetramer probably differ in the extent of glycosylation; simultaneous glycosylation of all experimentally validated sites would probably create steric hindrance. Post-translationally, phosphorylated. Phosphorylation is important for protein function; a mutant that lacks the N-terminal phosphorylation sites cannot complement a zebrafish pkd2-deficient mutant. PKD-mediated phosphorylation at the C-terminus regulates its function in the release of Ca(2+) stores from the endoplasmic reticulum. Phosphorylation at Ser-814 regulates PKD2 trafficking. Phosphorylation at Ser-76 is required for PKD2 trafficking to or retention at the lateral plasma membrane. Phosphorylation at Ser-803, Ser-814 and Ser-831 regulates PKD2 channel activity. In terms of processing, sumoylated by SUMO1; sumoylation regulates PKD2 membrane recycling and is necessary for intravascular pressure-induced arterial contractility. As to expression, expressed in mesenchymally derived structures in the developing embryo at day 12.5. In adult, mostly expressed in kidney.

It is found in the cell projection. It localises to the cilium membrane. The protein localises to the endoplasmic reticulum membrane. The protein resides in the cell membrane. Its subcellular location is the basolateral cell membrane. It is found in the cytoplasmic vesicle membrane. It localises to the golgi apparatus. The protein localises to the vesicle. The protein resides in the secreted. Its subcellular location is the extracellular exosome. It catalyses the reaction K(+)(in) = K(+)(out). The catalysed reaction is Na(+)(in) = Na(+)(out). The enzyme catalyses Ca(2+)(in) = Ca(2+)(out). With respect to regulation, channel activity is regulated by phosphorylation. Channel activity is regulated by intracellular Ca(2+). At the endoplasmic reticulum membrane (ER), TMEM33 enhances its channel activity. TMEM120A inhibits the channel activity of PKD2, and mediates mechanosensitivity of the PKD2-TMEM120A channel complex. PKD1/PKD2 complex on the plasma membrane is activated by PKD1 N-terminus. In terms of biological role, forms a nonselective cation channel. Can function as a homotetrameric ion channel or can form heteromer with PKD1. Displays distinct function depending on its subcellular localization and regulation by its binding partners. Functions as a cation channel, with a preference for monovalent cations over divalent cations that allows K(+), Na(+) and Ca(2+) influx, with low selectivity for Ca(2+). Involved in fluid-flow mechanosensation in the primary cilium in renal epithelium. In the endoplasmic reticulum, likely functions as a K(+) channel to facilitate Ca(2+) release. The heterotetrameric PKD1/PKD2 channel has higher Ca(2+) permeability than homomeric PKD2 channel and acts as a primarily Ca(2+)-permeable channel. Interacts with and acts as a regulator of a number of other channels, such as TRPV4, TRPC1, IP3R, RYR2, ultimately further affecting intracellular signaling, to modulate intracellular Ca(2+) signaling. Together with TRPV4, forms mechano- and thermosensitive channels in cilium. In cardiomyocytes, PKD2 modulates Ca(2+) release from stimulated RYR2 receptors through direct association. Also involved in left-right axis specification via its role in sensing nodal flow; forms a complex with PKD1L1 in cilia to facilitate flow detection in left-right patterning. Acts as a regulator of cilium length together with PKD1. Mediates systemic blood pressure and contributes to the myogenic response in cerebral arteries though vasoconstriction. This is Polycystin-2 from Bos taurus (Bovine).